The following is a 907-amino-acid chain: Translation initiation factor IF-2 (907 aa).

Residues Met1–Glu305 are disordered. The segment covering Ser62–Gly80 has biased composition (gly residues). 2 stretches are compositionally biased toward basic and acidic residues: residues Arg93–Lys114 and Glu122–Ala158. Positions Pro211 to Pro230 are enriched in low complexity. 2 stretches are compositionally biased toward basic and acidic residues: residues Arg240 to Arg249 and Lys271 to Arg280. Residues Pro406–Arg576 enclose the tr-type G domain. The interval Gly415–Thr422 is G1. A GTP-binding site is contributed by Gly415–Thr422. A G2 region spans residues Gly440–His444. The interval Asp462 to Gly465 is G3. GTP is bound by residues Asp462–His466 and Asn516–Asp519. The interval Asn516–Asp519 is G4. The interval Ser552 to Leu554 is G5.

It belongs to the TRAFAC class translation factor GTPase superfamily. Classic translation factor GTPase family. IF-2 subfamily.

The protein resides in the cytoplasm. Functionally, one of the essential components for the initiation of protein synthesis. Protects formylmethionyl-tRNA from spontaneous hydrolysis and promotes its binding to the 30S ribosomal subunits. Also involved in the hydrolysis of GTP during the formation of the 70S ribosomal complex. The chain is Translation initiation factor IF-2 from Gluconacetobacter diazotrophicus (strain ATCC 49037 / DSM 5601 / CCUG 37298 / CIP 103539 / LMG 7603 / PAl5).